The sequence spans 69 residues: Light-harvesting protein B-1015 alpha chain (69 aa).

The Cytoplasmic portion of the chain corresponds to 2 to 20 (ATEYRTASWKLWLILDPRR). Residues 21 to 41 (VLTALFVYLTVIALLIHFGLL) form a helical membrane-spanning segment. An a bacteriochlorophyll-binding site is contributed by His37. At 42 to 59 (STDRLNWWEFQRGLPKAA) the chain is on the periplasmic side. The propeptide occupies 60–69 (SLVVVPPAVG).

Belongs to the antenna complex alpha subunit family. The core complex is formed by different alpha and beta chains, binding bacteriochlorophyll molecules, and arranged most probably in tetrameric structures disposed around the reaction center. The non-pigmented gamma chains may constitute additional components.

It localises to the cell inner membrane. In terms of biological role, antenna complexes are light-harvesting systems, which transfer the excitation energy to the reaction centers. The sequence is that of Light-harvesting protein B-1015 alpha chain (pufA) from Blastochloris viridis (Rhodopseudomonas viridis).